We begin with the raw amino-acid sequence, 1189 residues long: Magnesium-chelatase subunit H (1189 aa).

Belongs to the Mg-chelatase subunit H family.

The catalysed reaction is protoporphyrin IX + Mg(2+) + ATP + H2O = Mg-protoporphyrin IX + ADP + phosphate + 3 H(+). It participates in porphyrin-containing compound metabolism; bacteriochlorophyll biosynthesis (light-independent). Involved in bacteriochlorophyll pigment biosynthesis; introduces a magnesium ion into protoporphyrin IX to yield Mg-protoroporphyrin IX. The sequence is that of Magnesium-chelatase subunit H (bchH) from Rhodobacter capsulatus (strain ATCC BAA-309 / NBRC 16581 / SB1003).